A 423-amino-acid polypeptide reads, in one-letter code: uncharacterized protein (423 aa).

A signal peptide spans 1 to 16; the sequence is MKSRIFFITLLTIVAA. Residues 17–402 are Extracellular-facing; the sequence is QESADQLCSS…SSSAKEEQTS (386 aa). Intrachain disulfides connect cysteine 24–cysteine 217, cysteine 33–cysteine 43, cysteine 36–cysteine 68, cysteine 46–cysteine 57, cysteine 219–cysteine 238, cysteine 230–cysteine 241, cysteine 243–cysteine 252, cysteine 254–cysteine 288, cysteine 271–cysteine 286, cysteine 280–cysteine 291, cysteine 293–cysteine 303, cysteine 305–cysteine 327, cysteine 310–cysteine 325, cysteine 319–cysteine 330, cysteine 332–cysteine 341, and cysteine 343–cysteine 350. Asparagine 65 is a glycosylation site (N-linked (GlcNAc...) asparagine). Residues 215–350 are cysteine-rich tandem repeats; the sequence is CGCECEKHPE…CSCSTASNNC (136 aa). 3 I-EGF domains span residues 219-253, 254-304, and 305-342; these read CEKHPEINSRLCHQNGHLVCGQCVCDQSRGGDKCE, CPLA…KFCQ, and CDNDSCPLAVNGKVCSGNGVCDCGVCKCEMGWERDDCS. The N-linked (GlcNAc...) asparagine glycan is linked to asparagine 274. A glycan (N-linked (GlcNAc...) asparagine) is linked at asparagine 307. The tract at residues 354-406 is disordered; the sequence is GTPAPEEKDKPESVPEEPEATEKPDDMPSDSDLEKELDESSSAKEEQTSSSGV. The span at 380–392 shows a compositional bias: acidic residues; it reads MPSDSDLEKELDE. Residues 403 to 421 traverse the membrane as a helical segment; that stretch reads SSGVVSRVCVLLTFFLLVL. Residues 422-423 lie on the Cytoplasmic side of the membrane; that stretch reads NF.

It belongs to the integrin beta chain family.

The protein resides in the membrane. This is an uncharacterized protein from Caenorhabditis elegans.